Consider the following 240-residue polypeptide: Ribonuclease PH (240 aa).

Residues R87 and 125–127 each bind phosphate; that span reads GTR.

This sequence belongs to the RNase PH family. As to quaternary structure, homohexameric ring arranged as a trimer of dimers.

The catalysed reaction is tRNA(n+1) + phosphate = tRNA(n) + a ribonucleoside 5'-diphosphate. Its function is as follows. Phosphorolytic 3'-5' exoribonuclease that plays an important role in tRNA 3'-end maturation. Removes nucleotide residues following the 3'-CCA terminus of tRNAs; can also add nucleotides to the ends of RNA molecules by using nucleoside diphosphates as substrates, but this may not be physiologically important. Probably plays a role in initiation of 16S rRNA degradation (leading to ribosome degradation) during starvation. The sequence is that of Ribonuclease PH from Stutzerimonas stutzeri (strain A1501) (Pseudomonas stutzeri).